A 684-amino-acid polypeptide reads, in one-letter code: Putative glucan endo-1,3-beta-glucosidase btgC (684 aa).

Polar residues predominate over residues methionine 1 to tyrosine 10. Disordered regions lie at residues methionine 1–threonine 38, alanine 124–aspartate 143, and aspartate 157–serine 182. Over methionine 1–arginine 302 the chain is Cytoplasmic. Residues arginine 12–glutamate 32 are compositionally biased toward basic and acidic residues. A helical; Signal-anchor for type II membrane protein membrane pass occupies residues glycine 303 to valine 323. Residues glycine 324–threonine 684 lie on the Extracellular side of the membrane. The tract at residues glutamine 330–glycine 358 is disordered. Low complexity predominate over residues threonine 336–glycine 347. Residues asparagine 404, asparagine 427, asparagine 455, and asparagine 474 are each glycosylated (N-linked (GlcNAc...) asparagine). Glutamate 487 (proton donor) is an active-site residue. The active-site Nucleophile is glutamate 586. Asparagine 631 carries an N-linked (GlcNAc...) asparagine glycan.

The protein belongs to the glycosyl hydrolase 17 family.

The protein localises to the cell membrane. The catalysed reaction is Hydrolysis of (1-&gt;3)-beta-D-glucosidic linkages in (1-&gt;3)-beta-D-glucans.. Functionally, glucanases play a role in cell expansion during growth, in cell-cell fusion during mating, and in spore release during sporulation. This enzyme may be involved in beta-glucan degradation. Active on laminarin and lichenan. In Aspergillus niger (strain ATCC MYA-4892 / CBS 513.88 / FGSC A1513), this protein is Putative glucan endo-1,3-beta-glucosidase btgC (btgC).